A 267-amino-acid chain; its full sequence is B3 domain-containing protein At3g11580 (267 aa).

The segment at residues 29–143 (FEKSLTPSDV…RLFIGWRRRG (115 aa)) is a DNA-binding region (TF-B3).

Its subcellular location is the nucleus. The chain is B3 domain-containing protein At3g11580 (ARF32) from Arabidopsis thaliana (Mouse-ear cress).